A 160-amino-acid polypeptide reads, in one-letter code: Cytochrome b6-f complex subunit 4 (160 aa).

3 helical membrane passes run 36–56 (LLYI…GLAV), 95–115 (LLGI…PFIE), and 128–148 (IAMS…IGAC).

It belongs to the cytochrome b family. PetD subfamily. The 4 large subunits of the cytochrome b6-f complex are cytochrome b6, subunit IV (17 kDa polypeptide, PetD), cytochrome f and the Rieske protein, while the 4 small subunits are PetG, PetL, PetM and PetN. The complex functions as a dimer.

The protein resides in the cellular thylakoid membrane. Its function is as follows. Component of the cytochrome b6-f complex, which mediates electron transfer between photosystem II (PSII) and photosystem I (PSI), cyclic electron flow around PSI, and state transitions. This is Cytochrome b6-f complex subunit 4 from Prochlorococcus marinus (strain MIT 9312).